The primary structure comprises 58 residues: Protein SHMOOSE (58 aa).

Residues 27-58 (FGATPNKSNNHAHYYNHPNPDFPNSPHPYHPR) are disordered. The segment covering 35–45 (NNHAHYYNHPN) has biased composition (low complexity). Positions 46–58 (PDFPNSPHPYHPR) are enriched in pro residues.

Interacts with IMMT/mitofilin. In terms of tissue distribution, detected in cerebrospinal fluid (at protein level).

The protein resides in the mitochondrion. It localises to the nucleus. In terms of biological role, increases neural cell metabolic activity and mitochondrial oxygen consumption rate. This is Protein SHMOOSE from Homo sapiens (Human).